The sequence spans 290 residues: Sodium/potassium-transporting ATPase subunit beta-2 (290 aa).

Residues 1-39 (MVIQKEKKSCGQVVEEWKEFVWNPRTHQFMGRTGTSWAF) are Cytoplasmic-facing. The chain crosses the membrane as a helical; Signal-anchor for type II membrane protein span at residues 40-67 (ILLFYLVFYGFLTAMFSLTMWVMLQTVS). Over 68–290 (DHTPKYQDRL…VAFKLRINKT (223 aa)) the chain is Extracellular. 2 N-linked (GlcNAc...) asparagine glycosylation sites follow: Asn-96 and Asn-118. A disulfide bond links Cys-129 and Cys-150. The N-linked (GlcNAc...) asparagine glycan is linked to Asn-153. Cys-160 and Cys-177 form a disulfide bridge. N-linked (GlcNAc...) asparagine glycosylation is found at Asn-193, Asn-197, Asn-220, and Asn-238. An immunoglobulin-like region spans residues 193–290 (NQSMNVTCVG…VAFKLRINKT (98 aa)). The cysteines at positions 200 and 261 are disulfide-linked.

It belongs to the X(+)/potassium ATPases subunit beta family. The sodium/potassium-transporting ATPase is composed of a catalytic alpha subunit, an auxiliary non-catalytic beta subunit and an additional regulatory subunit. Interacts with isoform 2 of BSG.

It is found in the cell membrane. Its function is as follows. This is the non-catalytic component of the active enzyme, which catalyzes the hydrolysis of ATP coupled with the exchange of Na(+) and K(+) ions across the plasma membrane. The exact function of the beta-2 subunit is not known. Mediates cell adhesion of neurons and astrocytes, and promotes neurite outgrowth. In Mus musculus (Mouse), this protein is Sodium/potassium-transporting ATPase subunit beta-2 (Atp1b2).